An 82-amino-acid polypeptide reads, in one-letter code: Colonization factor (82 aa).

Positions 1-33 are cleaved as a signal peptide; it reads MFSSLKNKLNTFKSTLSLGVFLLFSAFANQALA.

It localises to the secreted. In Vibrio cholerae serotype O1 (strain ATCC 39315 / El Tor Inaba N16961), this protein is Colonization factor (cep).